Consider the following 368-residue polypeptide: F-box/kelch-repeat protein At5g51250 (368 aa).

Residues 1–44 (MSSLPDDLLLSIFARISRLYYPTLSLVSKSFRSLLASPDLYKAR) form the F-box domain. Kelch repeat units lie at residues 116–163 (DIYN…VLDR), 165–218 (IYVA…CIDG), and 260–304 (LFYI…YGGK).

This is F-box/kelch-repeat protein At5g51250 from Arabidopsis thaliana (Mouse-ear cress).